We begin with the raw amino-acid sequence, 351 residues long: sn-glycerol-3-phosphate import ATP-binding protein UgpC (351 aa).

The region spanning 4-235 (IVLDNVRKSY…PASTFVATFI (232 aa)) is the ABC transporter domain. 37–44 (GPSGCGKS) serves as a coordination point for ATP.

Belongs to the ABC transporter superfamily. sn-glycerol-3-phosphate importer (TC 3.A.1.1.3) family. In terms of assembly, the complex is composed of two ATP-binding proteins (UgpC), two transmembrane proteins (UgpA and UgpE) and a solute-binding protein (UgpB).

Its subcellular location is the cell inner membrane. The catalysed reaction is sn-glycerol 3-phosphate(out) + ATP + H2O = sn-glycerol 3-phosphate(in) + ADP + phosphate + H(+). Part of the ABC transporter complex UgpBAEC involved in sn-glycerol-3-phosphate (G3P) import. Responsible for energy coupling to the transport system. The polypeptide is sn-glycerol-3-phosphate import ATP-binding protein UgpC (Brucella abortus biovar 1 (strain 9-941)).